The chain runs to 373 residues: Mitochondrial fission regulator 2 (373 aa).

The residue at position 136 (serine 136) is a Phosphoserine. Residues 151 to 179 adopt a coiled-coil conformation; it reads VSEAAIKKIAALEDELTSLRAQIAAIVAM. 2 disordered regions span residues 189 to 331 and 346 to 373; these read GFIS…WDPV and DDSF…GSRF. Positions 224 to 239 are enriched in pro residues; the sequence is SPPPLPPPPPPLPPPQ. 2 stretches are compositionally biased toward basic and acidic residues: residues 275–287 and 297–310; these read KKTD…ESQR and VLKD…RPVE. 2 positions are modified to phosphoserine: serine 312 and serine 348. Residues 354-373 are compositionally biased toward polar residues; sequence RSWQGSPFSSPETSRNGSRF.

It belongs to the MTFR1 family.

Its subcellular location is the mitochondrion. Functionally, may play a role in mitochondrial aerobic respiration essentially in the testis. Can also promote mitochondrial fission. The sequence is that of Mitochondrial fission regulator 2 (Mtfr2) from Rattus norvegicus (Rat).